The primary structure comprises 80 residues: Large ribosomal subunit protein bL31B (80 aa).

The protein belongs to the bacterial ribosomal protein bL31 family. Type B subfamily. Part of the 50S ribosomal subunit.

This is Large ribosomal subunit protein bL31B from Streptococcus sanguinis (strain SK36).